We begin with the raw amino-acid sequence, 360 residues long: Spore germination protein GerQB (360 aa).

Helical transmembrane passes span 11-31, 45-65, 84-104, 116-136, 142-162, 188-208, 220-240, 270-290, 300-320, and 331-351; these read SPYMVFFLIITIQMGVGMLGF, ISTLLFGISVNVMIWIIYQIL, IGGLLNFIFLSYIVLLGATTL, FPSISSWVIAGAFLGLCYYIV, VVAGIGFFGIVIPSILIFTFF, MKGNMFSFFGFEMLLLYYPFI, YANLVTTIVYTYLMILTLAFF, IIVSVWAFFILPNVSFTLWGV, IKQKYVLPVIILFIFILSFFL, and TWTGQIGFVYIYVYLPVLWLI.

Belongs to the amino acid-polyamine-organocation (APC) superfamily. Spore germination protein (SGP) (TC 2.A.3.9) family.

Its subcellular location is the membrane. Functionally, required for the germination response to inosine. Has no role in L-alanine germination. In Bacillus cereus, this protein is Spore germination protein GerQB (gerQB).